A 241-amino-acid polypeptide reads, in one-letter code: Phosphoribosylaminoimidazole-succinocarboxamide synthase (241 aa).

It belongs to the SAICAR synthetase family.

The enzyme catalyses 5-amino-1-(5-phospho-D-ribosyl)imidazole-4-carboxylate + L-aspartate + ATP = (2S)-2-[5-amino-1-(5-phospho-beta-D-ribosyl)imidazole-4-carboxamido]succinate + ADP + phosphate + 2 H(+). Its pathway is purine metabolism; IMP biosynthesis via de novo pathway; 5-amino-1-(5-phospho-D-ribosyl)imidazole-4-carboxamide from 5-amino-1-(5-phospho-D-ribosyl)imidazole-4-carboxylate: step 1/2. The chain is Phosphoribosylaminoimidazole-succinocarboxamide synthase from Deinococcus geothermalis (strain DSM 11300 / CIP 105573 / AG-3a).